We begin with the raw amino-acid sequence, 244 residues long: MVQNKTTGSCPKPTEVAPGGPSWCKTSNGHIKRPMNAFMVWSQIERRKLMSLCPNMHNADISRSLGQRWKLLQDTDKIPYVREAERLRLKHMADYPNYKYRPRRRSRTQESKTRARLPRSTATCQSVPSPCLSQMDTGSSMQWGETCPAWGGDQVGQSVETQIRESSARSPEVPTHTKTVPSSPQSAEEHEGLEGGSLVIPVDKEVPPHSGSHFEFPDHCTPEVMEMISGSGLLESVPDLVFSY.

Positions 1–22 (MVQNKTTGSCPKPTEVAPGGPS) are disordered. The HMG box DNA-binding region spans 31-99 (IKRPMNAFMV…KHMADYPNYK (69 aa)). Disordered stretches follow at residues 101-137 (RPRR…QMDT) and 152-193 (GDQV…HEGL). 2 stretches are compositionally biased toward polar residues: residues 120–137 (STAT…QMDT) and 176–186 (HTKTVPSSPQS).

Expressed at a low level in embryos, and in the adult lung, ovary, skeletal muscle, testis, brain and heart.

It is found in the nucleus. Functionally, transcription factor that binds to the sequence 5'-AACAAT-3'. Acts as a transcriptional activator. The sequence is that of Transcription factor Sox-12 (sox12) from Xenopus laevis (African clawed frog).